We begin with the raw amino-acid sequence, 274 residues long: Large ribosomal subunit protein uL2c (274 aa).

Disordered regions lie at residues 1 to 22 (MAIH…DSQV) and 225 to 254 (PVDH…PALG).

It belongs to the universal ribosomal protein uL2 family. Part of the 50S ribosomal subunit.

Its subcellular location is the plastid. It localises to the chloroplast. This chain is Large ribosomal subunit protein uL2c (rpl2), found in Sinapis alba (White mustard).